A 234-amino-acid chain; its full sequence is OVARIAN TUMOR DOMAIN-containing deubiquitinating enzyme 3 (234 aa).

The OTU domain occupies 76–234 (YAVDRVKGDG…SGRNHYDLLR (159 aa)). Residues 81–87 (VKGDGRC) form a cys-loop region. Residue aspartate 84 is part of the active site. The active-site Nucleophile is the cysteine 87. Residues 154 to 164 (IGRHDFWGGES) form a variable-loop region. The segment at 224-229 (YSGRNH) is his-loop. The active site involves histidine 229.

The protein belongs to the peptidase C85 family.

It catalyses the reaction Thiol-dependent hydrolysis of ester, thioester, amide, peptide and isopeptide bonds formed by the C-terminal Gly of ubiquitin (a 76-residue protein attached to proteins as an intracellular targeting signal).. Functionally, hydrolase that can remove conjugated ubiquitin from proteins in vitro and may therefore play an important regulatory role at the level of protein turnover by preventing degradation. Cysteine protease with a preference for 'Lys-63' over 'Lys-48' over 'Met-1' -linked ubiquitin (UB) tetramers (e.g. Ub3 and Ub4) as substrates. Also cleaves RUB-GST fusion. The polypeptide is OVARIAN TUMOR DOMAIN-containing deubiquitinating enzyme 3 (Arabidopsis thaliana (Mouse-ear cress)).